Reading from the N-terminus, the 387-residue chain is Probable nitrate transporter NarT (387 aa).

Helical transmembrane passes span 14–34, 45–65, 69–89, 97–117, 137–157, 161–181, 211–231, 246–266, 268–288, 294–314, 330–350, and 358–378; these read TLSL…MPFI, ISVI…PFGY, IVGA…PIFL, GMLM…SVGV, GVGN…AGAI, NTVR…FFLG, WYFI…NFLV, GIFI…GDKF, AVQA…ILSL, LFTI…GLIF, GIVS…ITFV, and HLAF…MIHL.

The protein belongs to the major facilitator superfamily. Nitrate/nitrite porter (TC 2.A.1.8) family.

It localises to the cell membrane. Functionally, probably required for nitrate uptake under anoxic conditions. Also possibly involved in excretion of nitrite produced by the dissimilatory reduction of nitrate. The sequence is that of Probable nitrate transporter NarT (narT) from Staphylococcus epidermidis (strain ATCC 35984 / DSM 28319 / BCRC 17069 / CCUG 31568 / BM 3577 / RP62A).